Reading from the N-terminus, the 175-residue chain is Crossover junction endodeoxyribonuclease RuvC (175 aa).

Residues aspartate 7, glutamate 68, and aspartate 141 contribute to the active site. Positions 7, 68, and 141 each coordinate Mg(2+).

The protein belongs to the RuvC family. As to quaternary structure, homodimer which binds Holliday junction (HJ) DNA. The HJ becomes 2-fold symmetrical on binding to RuvC with unstacked arms; it has a different conformation from HJ DNA in complex with RuvA. In the full resolvosome a probable DNA-RuvA(4)-RuvB(12)-RuvC(2) complex forms which resolves the HJ. The cofactor is Mg(2+).

Its subcellular location is the cytoplasm. It catalyses the reaction Endonucleolytic cleavage at a junction such as a reciprocal single-stranded crossover between two homologous DNA duplexes (Holliday junction).. Its function is as follows. The RuvA-RuvB-RuvC complex processes Holliday junction (HJ) DNA during genetic recombination and DNA repair. Endonuclease that resolves HJ intermediates. Cleaves cruciform DNA by making single-stranded nicks across the HJ at symmetrical positions within the homologous arms, yielding a 5'-phosphate and a 3'-hydroxyl group; requires a central core of homology in the junction. The consensus cleavage sequence is 5'-(A/T)TT(C/G)-3'. Cleavage occurs on the 3'-side of the TT dinucleotide at the point of strand exchange. HJ branch migration catalyzed by RuvA-RuvB allows RuvC to scan DNA until it finds its consensus sequence, where it cleaves and resolves the cruciform DNA. In Salinispora arenicola (strain CNS-205), this protein is Crossover junction endodeoxyribonuclease RuvC.